The sequence spans 450 residues: Tubulin alpha-1 chain (450 aa).

Residues Q11, E71, G144, T145, T179, N206, and N228 each coordinate GTP. E71 is a Mg(2+) binding site. E254 is a catalytic residue.

It belongs to the tubulin family. As to quaternary structure, dimer of alpha and beta chains. A typical microtubule is a hollow water-filled tube with an outer diameter of 25 nm and an inner diameter of 15 nM. Alpha-beta heterodimers associate head-to-tail to form protofilaments running lengthwise along the microtubule wall with the beta-tubulin subunit facing the microtubule plus end conferring a structural polarity. Microtubules usually have 13 protofilaments but different protofilament numbers can be found in some organisms and specialized cells. Mg(2+) is required as a cofactor. Post-translationally, undergoes a tyrosination/detyrosination cycle, the cyclic removal and re-addition of a C-terminal tyrosine residue by the enzymes tubulin tyrosine carboxypeptidase (TTCP) and tubulin tyrosine ligase (TTL), respectively.

It localises to the cytoplasm. Its subcellular location is the cytoskeleton. The catalysed reaction is GTP + H2O = GDP + phosphate + H(+). Tubulin is the major constituent of microtubules, a cylinder consisting of laterally associated linear protofilaments composed of alpha- and beta-tubulin heterodimers. Microtubules grow by the addition of GTP-tubulin dimers to the microtubule end, where a stabilizing cap forms. Below the cap, tubulin dimers are in GDP-bound state, owing to GTPase activity of alpha-tubulin. This Hordeum vulgare (Barley) protein is Tubulin alpha-1 chain (TUBA1).